A 449-amino-acid chain; its full sequence is Exodeoxyribonuclease 7 large subunit (449 aa).

Belongs to the XseA family. Heterooligomer composed of large and small subunits.

The protein localises to the cytoplasm. It catalyses the reaction Exonucleolytic cleavage in either 5'- to 3'- or 3'- to 5'-direction to yield nucleoside 5'-phosphates.. Its function is as follows. Bidirectionally degrades single-stranded DNA into large acid-insoluble oligonucleotides, which are then degraded further into small acid-soluble oligonucleotides. The polypeptide is Exodeoxyribonuclease 7 large subunit (Salmonella newport (strain SL254)).